We begin with the raw amino-acid sequence, 340 residues long: Histidinol-phosphate aminotransferase (340 aa).

Lysine 204 carries the N6-(pyridoxal phosphate)lysine modification.

Belongs to the class-II pyridoxal-phosphate-dependent aminotransferase family. Histidinol-phosphate aminotransferase subfamily. It depends on pyridoxal 5'-phosphate as a cofactor.

It carries out the reaction L-histidinol phosphate + 2-oxoglutarate = 3-(imidazol-4-yl)-2-oxopropyl phosphate + L-glutamate. Its pathway is amino-acid biosynthesis; L-histidine biosynthesis; L-histidine from 5-phospho-alpha-D-ribose 1-diphosphate: step 7/9. This is Histidinol-phosphate aminotransferase from Thermococcus gammatolerans (strain DSM 15229 / JCM 11827 / EJ3).